The sequence spans 379 residues: Tryptophan 2,3-dioxygenase (379 aa).

Residues 57–61 (FIITH) and Arg-128 contribute to the substrate site. Residue His-312 participates in heme binding. Substrate is bound at residue Thr-327.

Belongs to the tryptophan 2,3-dioxygenase family. Homotetramer. Dimer of dimers. Heme is required as a cofactor.

It catalyses the reaction L-tryptophan + O2 = N-formyl-L-kynurenine. The protein operates within amino-acid degradation; L-tryptophan degradation via kynurenine pathway; L-kynurenine from L-tryptophan: step 1/2. It participates in pigment biosynthesis; ommochrome biosynthesis. In terms of biological role, heme-dependent dioxygenase that catalyzes the oxidative cleavage of the L-tryptophan (L-Trp) pyrrole ring and converts L-tryptophan to N-formyl-L-kynurenine. Catalyzes the oxidative cleavage of the indole moiety. The polypeptide is Tryptophan 2,3-dioxygenase (Drosophila sechellia (Fruit fly)).